A 161-amino-acid chain; its full sequence is DNA-directed RNA polymerase 18 kDa subunit (161 aa).

It belongs to the poxviridae DNA-directed RNA polymerase 18 kDa subunit family. As to quaternary structure, the DNA-dependent RNA polymerase used for intermediate and late genes expression consists of eight subunits Rpo30/OPG66, Rpo7/OPG90, Rpo22/OPG103, Rpo147/OPG105, Rpo18/OPG119, Rpo19/OPG131, Rpo132/OPG151 and Rpo35/OPG156. The same holoenzyme, with the addition of the transcription-specificity factor OPG109, is used for early gene expression.

It localises to the virion. It catalyses the reaction RNA(n) + a ribonucleoside 5'-triphosphate = RNA(n+1) + diphosphate. In terms of biological role, part of the DNA-dependent RNA polymerase which catalyzes the transcription of viral DNA into RNA using the four ribonucleoside triphosphates as substrates. Responsible for the transcription of early, intermediate and late genes. DNA-dependent RNA polymerase associates with the early transcription factor (ETF), itself composed of OPG118 and OPG133, thereby allowing the early genes transcription. Late transcription, and probably also intermediate transcription, require newly synthesized RNA polymerase. The chain is DNA-directed RNA polymerase 18 kDa subunit (OPG119) from Vaccinia virus (strain Ankara) (VACV).